A 287-amino-acid chain; its full sequence is ATP synthase gamma chain (287 aa).

The protein belongs to the ATPase gamma chain family. F-type ATPases have 2 components, CF(1) - the catalytic core - and CF(0) - the membrane proton channel. CF(1) has five subunits: alpha(3), beta(3), gamma(1), delta(1), epsilon(1). CF(0) has three main subunits: a, b and c.

The protein resides in the cell inner membrane. In terms of biological role, produces ATP from ADP in the presence of a proton gradient across the membrane. The gamma chain is believed to be important in regulating ATPase activity and the flow of protons through the CF(0) complex. This Baumannia cicadellinicola subsp. Homalodisca coagulata protein is ATP synthase gamma chain.